An 89-amino-acid chain; its full sequence is RNA-binding protein Hfq (89 aa).

The 60-residue stretch at 14 to 73 (DPYLNALRKEKINVAIYLVNGVKLQGRVDSFDQFVVLLRSNVTQMVYKHAISTIVPARDP) folds into the Sm domain.

Belongs to the Hfq family. In terms of assembly, homohexamer.

Functionally, RNA chaperone that binds small regulatory RNA (sRNAs) and mRNAs to facilitate mRNA translational regulation in response to envelope stress, environmental stress and changes in metabolite concentrations. Also binds with high specificity to tRNAs. The sequence is that of RNA-binding protein Hfq from Hydrogenovibrio crunogenus (strain DSM 25203 / XCL-2) (Thiomicrospira crunogena).